Consider the following 931-residue polypeptide: Protein translocase subunit SecA (931 aa).

Residues Q87, G105 to T109, and D523 contribute to the ATP site. Zn(2+)-binding residues include C915, C917, C926, and H927.

It belongs to the SecA family. Monomer and homodimer. Part of the essential Sec protein translocation apparatus which comprises SecA, SecYEG and auxiliary proteins SecDF-YajC and YidC. The cofactor is Zn(2+).

Its subcellular location is the cell inner membrane. It localises to the cytoplasm. It carries out the reaction ATP + H2O + cellular proteinSide 1 = ADP + phosphate + cellular proteinSide 2.. Functionally, part of the Sec protein translocase complex. Interacts with the SecYEG preprotein conducting channel. Has a central role in coupling the hydrolysis of ATP to the transfer of proteins into and across the cell membrane, serving both as a receptor for the preprotein-SecB complex and as an ATP-driven molecular motor driving the stepwise translocation of polypeptide chains across the membrane. The polypeptide is Protein translocase subunit SecA (Xanthobacter autotrophicus (strain ATCC BAA-1158 / Py2)).